We begin with the raw amino-acid sequence, 106 residues long: uncharacterized protein (106 aa).

This sequence belongs to the csb family.

This is an uncharacterized protein from Dictyostelium discoideum (Social amoeba).